Here is a 108-residue protein sequence, read N- to C-terminus: Anti-CBASS protein 2 (108 aa).

Positions 4, 11, and 26 each coordinate 3',3'-cGAMP.

This sequence belongs to the Acb2 family. Homohexamer in apo and 3',3'-cGAMP-bound form.

In terms of biological role, antagonizes CBASS (cyclic oligonucleotide-based antiphage signaling system). Binds and sequesters host-produced 3',3'-cyclic GMP-AMP (cGAMP) (thus preventing host CapV activation) without degrading the cyclic nucleotide. Probably binds some other cyclic dinucleotides as well. This is Anti-CBASS protein 2 from Pseudomonas phage JBD67.